We begin with the raw amino-acid sequence, 118 residues long: Small ribosomal subunit protein uS13 (118 aa).

Residues 94 to 118 form a disordered region; it reads GLPLRGQRTRTNARTRKGPRKAIRK.

The protein belongs to the universal ribosomal protein uS13 family. Part of the 30S ribosomal subunit. Forms a loose heterodimer with protein S19. Forms two bridges to the 50S subunit in the 70S ribosome.

In terms of biological role, located at the top of the head of the 30S subunit, it contacts several helices of the 16S rRNA. In the 70S ribosome it contacts the 23S rRNA (bridge B1a) and protein L5 of the 50S subunit (bridge B1b), connecting the 2 subunits; these bridges are implicated in subunit movement. Contacts the tRNAs in the A and P-sites. This chain is Small ribosomal subunit protein uS13, found in Xanthomonas axonopodis pv. citri (strain 306).